Reading from the N-terminus, the 658-residue chain is Glycogen debranching enzyme (658 aa).

Asp336 (nucleophile) is an active-site residue. The active-site Proton donor is the Glu371.

Belongs to the glycosyl hydrolase 13 family.

The enzyme catalyses Hydrolysis of (1-&gt;6)-alpha-D-glucosidic linkages to branches with degrees of polymerization of three or four glucose residues in limit dextrin.. The protein operates within glycan degradation; glycogen degradation. Functionally, removes maltotriose and maltotetraose chains that are attached by 1,6-alpha-linkage to the limit dextrin main chain, generating a debranched limit dextrin. The protein is Glycogen debranching enzyme of Klebsiella pneumoniae subsp. pneumoniae (strain ATCC 700721 / MGH 78578).